Reading from the N-terminus, the 762-residue chain is Phospholipase D alpha 4 (762 aa).

Positions 1–116 (MELEEQKKYF…VINGFFPLIA (116 aa)) constitute a C2 domain. Ca(2+) is bound at residue Asp172. Residues 301 to 339 (TAFAHHQKTITLDTRVTNSSTKEREIMSFLGGFDLCDGR) form the PLD phosphodiesterase 1 domain. Residues His306, Lys308, and Asp313 contribute to the active site. His306 is an a 1,2-diacyl-sn-glycero-3-phosphate binding site. The Ca(2+) site is built by His345 and His377. A 1,2-diacyl-sn-glycero-3-phosphate is bound by residues Gln477 and His615. One can recognise a PLD phosphodiesterase 2 domain in the interval 610-637 (FMVYVHSKLMIVDDTYILIGSANINQRS). Catalysis depends on residues His615, Lys617, and Asp622. Ca(2+) is bound at residue Glu671.

Belongs to the phospholipase D family. C2-PLD subfamily. The cofactor is Ca(2+). As to expression, expressed in roots, leaves, stems, siliques,flowers and inflorescences.

It is found in the cell membrane. The catalysed reaction is a 1,2-diacyl-sn-glycero-3-phosphocholine + H2O = a 1,2-diacyl-sn-glycero-3-phosphate + choline + H(+). Functionally, hydrolyzes glycerol-phospholipids at the terminal phosphodiesteric bond to generate phosphatidic acids (PA). Promotes growth and plays a role in nitrogen signaling. In Arabidopsis thaliana (Mouse-ear cress), this protein is Phospholipase D alpha 4.